A 161-amino-acid polypeptide reads, in one-letter code: Putative pre-16S rRNA nuclease (161 aa).

It belongs to the YqgF nuclease family.

It localises to the cytoplasm. Its function is as follows. Could be a nuclease involved in processing of the 5'-end of pre-16S rRNA. The polypeptide is Putative pre-16S rRNA nuclease (Rhodospirillum rubrum (strain ATCC 11170 / ATH 1.1.1 / DSM 467 / LMG 4362 / NCIMB 8255 / S1)).